The sequence spans 520 residues: GMP synthase [glutamine-hydrolyzing] (520 aa).

A Glutamine amidotransferase type-1 domain is found at 9–202; that stretch reads TILIIDFGSQ…VHRIVGVKPG (194 aa). Cysteine 86 functions as the Nucleophile in the catalytic mechanism. Catalysis depends on residues histidine 176 and glutamate 178. One can recognise a GMPS ATP-PPase domain in the interval 203–395; sequence WTMGAYREQA…LGLPDSFIGR (193 aa). 230-236 lines the ATP pocket; the sequence is SGGVDSS.

In terms of assembly, homodimer.

It carries out the reaction XMP + L-glutamine + ATP + H2O = GMP + L-glutamate + AMP + diphosphate + 2 H(+). It participates in purine metabolism; GMP biosynthesis; GMP from XMP (L-Gln route): step 1/1. Catalyzes the synthesis of GMP from XMP. In Brucella abortus (strain S19), this protein is GMP synthase [glutamine-hydrolyzing].